A 220-amino-acid chain; its full sequence is Cytidylate kinase (220 aa).

10 to 18 (GPASSGKST) is a binding site for ATP.

It belongs to the cytidylate kinase family. Type 1 subfamily.

The protein resides in the cytoplasm. It catalyses the reaction CMP + ATP = CDP + ADP. The enzyme catalyses dCMP + ATP = dCDP + ADP. This Lactococcus lactis subsp. lactis (strain IL1403) (Streptococcus lactis) protein is Cytidylate kinase.